The primary structure comprises 141 residues: Putative pre-16S rRNA nuclease (141 aa).

It belongs to the YqgF nuclease family.

Its subcellular location is the cytoplasm. Its function is as follows. Could be a nuclease involved in processing of the 5'-end of pre-16S rRNA. In Cupriavidus necator (strain ATCC 17699 / DSM 428 / KCTC 22496 / NCIMB 10442 / H16 / Stanier 337) (Ralstonia eutropha), this protein is Putative pre-16S rRNA nuclease.